The chain runs to 169 residues: 3-hydroxyanthranilate 3,4-dioxygenase (169 aa).

Arg44 provides a ligand contact to O2. Fe cation is bound by residues His48, Glu54, and His92. Position 54 (Glu54) interacts with substrate. Residues Arg96 and Glu106 each contribute to the substrate site. The a divalent metal cation site is built by Cys121, Cys124, Cys158, and Cys160.

Belongs to the 3-HAO family. It depends on Fe(2+) as a cofactor.

Its subcellular location is the cytoplasm. It carries out the reaction 3-hydroxyanthranilate + O2 = (2Z,4Z)-2-amino-3-carboxymuconate 6-semialdehyde. Its pathway is cofactor biosynthesis; NAD(+) biosynthesis; quinolinate from L-kynurenine: step 3/3. In terms of biological role, catalyzes the oxidative ring opening of 3-hydroxyanthranilate to 2-amino-3-carboxymuconate semialdehyde, which spontaneously cyclizes to quinolinate. The polypeptide is 3-hydroxyanthranilate 3,4-dioxygenase (Meyerozyma guilliermondii (strain ATCC 6260 / CBS 566 / DSM 6381 / JCM 1539 / NBRC 10279 / NRRL Y-324) (Yeast)).